Reading from the N-terminus, the 414-residue chain is Gamma-glutamyl phosphate reductase (414 aa).

It belongs to the gamma-glutamyl phosphate reductase family.

Its subcellular location is the cytoplasm. It carries out the reaction L-glutamate 5-semialdehyde + phosphate + NADP(+) = L-glutamyl 5-phosphate + NADPH + H(+). It functions in the pathway amino-acid biosynthesis; L-proline biosynthesis; L-glutamate 5-semialdehyde from L-glutamate: step 2/2. Its function is as follows. Catalyzes the NADPH-dependent reduction of L-glutamate 5-phosphate into L-glutamate 5-semialdehyde and phosphate. The product spontaneously undergoes cyclization to form 1-pyrroline-5-carboxylate. The protein is Gamma-glutamyl phosphate reductase of Kosmotoga olearia (strain ATCC BAA-1733 / DSM 21960 / TBF 19.5.1).